The chain runs to 109 residues: MPSESRKRLSSKKGATVRLELVENYVICFFTVLCFCLIPHSSIDWRSGLSCYYFIDFFFFHLSPSIPFWFYPFSVKNHHTRSIRPRTKSEKNKQVVSDPFLYSCSRVAF.

Transmembrane regions (helical) follow at residues 19–39 and 53–73; these read LELV…CLIP and YFID…FYPF.

It is found in the membrane. This is an uncharacterized protein from Saccharomyces cerevisiae (strain ATCC 204508 / S288c) (Baker's yeast).